We begin with the raw amino-acid sequence, 127 residues long: Turripeptide OL172 (127 aa).

Positions 1 to 20 (MFSTLIFLTAVTLLMMPSQT) are cleaved as a signal peptide. Positions 42 to 43 (QR) are excised as a propeptide. At Gln-44 the chain carries Pyrrolidone carboxylic acid. The propeptide occupies 73–75 (QRK). Gln-76 is subject to Pyrrolidone carboxylic acid. Residues 104–106 (QRK) constitute a propeptide that is removed on maturation. Residue Gln-107 is modified to Pyrrolidone carboxylic acid.

The turripeptide OL172 conotoxin-like contains 2 disulfide bonds. Expressed by the venom duct.

Its subcellular location is the secreted. Its function is as follows. Acts as a neurotoxin by inhibiting an ion channel. This Iotyrris olangoensis (Sea snail) protein is Turripeptide OL172.